We begin with the raw amino-acid sequence, 80 residues long: Crustacean hyperglycemic hormones (80 aa).

3 cysteine pairs are disulfide-bonded: Cys13–Cys49, Cys29–Cys45, and Cys32–Cys58. Position 78 is a valine amide (Val78).

It belongs to the arthropod CHH/MIH/GIH/VIH hormone family. In terms of tissue distribution, produced by the medulla terminalis X-organ in the eyestalks and transported to the sinus gland where they are stored and released.

Its subcellular location is the secreted. Functionally, hormone found in the sinus gland of isopods and decapods which controls the blood sugar level. Has a secretagogue action over the amylase released from the midgut gland. May act as a stress hormone and may be involved in the control of molting and reproduction. This chain is Crustacean hyperglycemic hormones, found in Penaeus vannamei (Whiteleg shrimp).